Consider the following 403-residue polypeptide: MSKDFDLIIRNAYLSEKDSVYDIGIVGDRIIKIEAKIEGTVKDEIDAKGNLVSPGFVDAHTHMDKSFTSTGERLPKFWSRPYTRDAAIEDGLKYYKNATHEEIKRHVIEHAHMQVLHGTLYTRTHVDVDSVAKTKAVEAVLEAKEELKDLIDIQVVAFAQSGFFVDLESESLIRKSLDMGCDLVGGVDPATRENNVEGSLDLCFKLAKEYDVDIDYHIHDIGTVGVYSINRLAQKTIENGYKGRVTTSHAWCFADAPSEWLDEAIPLYKDSGMKFVTCFSSTPPTMPVIKLLEAGINLGCASDNIRDFWVPFGNGDMVQGALIETQRLELKTNRDLGLIWKMITSEGARVLGIEKNYGIEVGKKADLVVLNSLSPQWAIIDQAKRLCVIKNGRIIVKDEVIVA.

The Zn(2+) site is built by His60, His62, and His217. Catalysis depends on His249, which acts as the Proton donor/acceptor. Position 303 (Asp303) interacts with Zn(2+).

It belongs to the metallo-dependent hydrolases superfamily. N-acyl-D-amino-acid deacylase family. Homotetramer. It depends on Zn(2+) as a cofactor.

The protein resides in the cytoplasm. It catalyses the reaction N-isopropylammelide + H2O + H(+) = isopropylamine + cyanurate. The protein operates within xenobiotic degradation; atrazine degradation; cyanurate from atrazine: step 3/3. Its activity is regulated as follows. Inhibited by N-ethylammeline, N-hydroxyethylammeline, N-isopropylammeline, ammeline and 2-amino-4hydroxy-1,3,5-s-triazine. Functionally, transforms N-isopropylammelide to cyanuric acid and isopropylamine. The chain is N-isopropylammelide isopropyl amidohydrolase (atzC) from Pseudomonas sp. (strain ADP).